The following is a 64-amino-acid chain: DNA-binding protein 7b (64 aa).

This sequence belongs to the 7 kDa DNA-binding/endoribonuclease P2 family. Monomer.

The protein resides in the cytoplasm. Its function is as follows. Can constrain negative DNA supercoils. May be involved in maintaining the integrity of the genome at high temperature. This is DNA-binding protein 7b from Saccharolobus islandicus (strain HVE10/4) (Sulfolobus islandicus).